A 91-amino-acid chain; its full sequence is Cell division topological specificity factor (91 aa).

Belongs to the MinE family.

Prevents the cell division inhibition by proteins MinC and MinD at internal division sites while permitting inhibition at polar sites. This ensures cell division at the proper site by restricting the formation of a division septum at the midpoint of the long axis of the cell. The protein is Cell division topological specificity factor of Thermoanaerobacter pseudethanolicus (strain ATCC 33223 / 39E) (Clostridium thermohydrosulfuricum).